Here is a 902-residue protein sequence, read N- to C-terminus: Glutamate receptor 4 (902 aa).

A signal peptide spans 1–20 (MRIICRQIVLLFSGFWGLAM). Topologically, residues 22–544 (AFPSSVQIGG…GVFSFLDPLA (523 aa)) are extracellular. 6 N-linked (GlcNAc...) asparagine glycosylation sites follow: Asn-52, Asn-56, Asn-258, Asn-371, Asn-407, and Asn-414. The cysteines at positions 84 and 331 are disulfide-linked. 3 residues coordinate L-glutamate: Pro-500, Thr-502, and Arg-507. A helical membrane pass occupies residues 545 to 565 (YEIWMCIVFAYIGVSVVLFLV). Residues 566 to 592 (SRFSPYEWHTEEPEDGKEGPSDQPPNE) lie on the Cytoplasmic side of the membrane. An intramembrane region (helical; Pore-forming) is located at residues 593-608 (FGIFNSLWFSLGAFMQ). An intramembrane segment occupies 609 to 611 (QGC). Cys-611 carries S-palmitoyl cysteine lipidation. Residues 612–617 (DISPRS) lie on the Cytoplasmic side of the membrane. Residues 618 to 638 (LSGRIVGGVWWFFTLIIISSY) traverse the membrane as a helical segment. Topologically, residues 639–813 (TANLAAFLTV…DKTSALSLSN (175 aa)) are extracellular. L-glutamate is bound by residues Ser-676, Thr-677, and Glu-727. The cysteines at positions 740 and 795 are disulfide-linked. A helical transmembrane segment spans residues 814–834 (VAGVFYILVGGLGLAMLVALI). At 835–902 (EFCYKSRAEA…GLAVIASDLP (68 aa)) the chain is on the cytoplasmic side. Residue Cys-837 is the site of S-palmitoyl cysteine attachment. A Phosphoserine modification is found at Ser-862.

This sequence belongs to the glutamate-gated ion channel (TC 1.A.10.1) family. GRIA4 subfamily. In terms of assembly, homotetramer or heterotetramer of pore-forming glutamate receptor subunits. Tetramers may be formed by the dimerization of dimers. Interacts with EPB41L1 via its C-terminus. Isoform 3 interacts with PICK1. Found in a complex with GRIA1, GRIA2, GRIA3, CNIH2, CNIH3, CACNG2, CACNG3, CACNG4, CACNG5, CACNG7 and CACNG8. Interacts with CACNG5 and PRKCG. Found in a complex with GRIA1, GRIA2, GRIA3, DLG4, CACNG8 and CNIH2. In terms of processing, palmitoylated. Depalmitoylated upon L-glutamate stimulation. ZDHHC3/GODZ specifically palmitoylates Cys-611, which leads to Golgi retention and decreased cell surface expression. In contrast, Cys-837 palmitoylation does not affect cell surface expression but regulates stimulation-dependent endocytosis. Post-translationally, phosphorylated at Ser-862 by PRKCG; phosphorylation increases plasma membrane-associated GRI4 expression.

It localises to the cell membrane. The protein localises to the postsynaptic cell membrane. The protein resides in the cell projection. It is found in the dendrite. The enzyme catalyses Ca(2+)(in) = Ca(2+)(out). It carries out the reaction Na(+)(in) = Na(+)(out). The catalysed reaction is Mg(2+)(in) = Mg(2+)(out). Its function is as follows. Ionotropic glutamate receptor that functions as a ligand-gated cation channel, gated by L-glutamate and glutamatergic agonists such as alpha-amino-3-hydroxy-5-methyl-4-isoxazolepropionic acid (AMPA), quisqualic acid, and kainic acid. L-glutamate acts as an excitatory neurotransmitter at many synapses in the central nervous system and plays an important role in fast excitatory synaptic transmission. Binding of the excitatory neurotransmitter L-glutamate induces a conformation change, leading to the opening of the cation channel, and thereby converts the chemical signal to an electrical impulse upon entry of monovalent and divalent cations such as sodium and calcium. The receptor then desensitizes rapidly and enters a transient inactive state, characterized by the presence of bound agonist. In the presence of CACNG8, shows resensitization which is characterized by a delayed accumulation of current flux upon continued application of L-glutamate. This Mus musculus (Mouse) protein is Glutamate receptor 4.